The following is a 555-amino-acid chain: Vacuolar fusion protein MON1 homolog A (555 aa).

Positions 1-12 (MAADMQRKRSSE) are enriched in basic and acidic residues. The segment at 1–90 (MAADMQRKRS…PPLATDMRQI (90 aa)) is disordered. Serine 31 and serine 56 each carry phosphoserine. Threonine 61 carries the phosphothreonine modification. Phosphoserine is present on serine 91. The tract at residues 112–149 (MLPGSSEDWPESPGAARRPATEPPRDGAGEGDEEEAAE) is disordered. Residues 130–139 (PATEPPRDGA) are compositionally biased toward basic and acidic residues.

This sequence belongs to the MON1/SAND family. In terms of assembly, interacts with CCZ1. Found in a complex with RMC1, CCZ1, MON1A and MON1B. The MON1A-CCZ1B complex interacts with RIMOC1. The MON1A-CCZ1B complex interacts with RAB7A and this interaction is enhanced in the presence of RIMOC1.

In terms of biological role, plays an important role in membrane trafficking through the secretory apparatus. Not involved in endocytic trafficking to lysosomes. Acts in concert with CCZ1, as a guanine exchange factor (GEF) for RAB7, promotes the exchange of GDP to GTP, converting it from an inactive GDP-bound form into an active GTP-bound form. In Bos taurus (Bovine), this protein is Vacuolar fusion protein MON1 homolog A (MON1A).